The sequence spans 219 residues: NADH-ubiquinone oxidoreductase 23 kDa subunit, mitochondrial (219 aa).

4Fe-4S ferredoxin-type domains lie at 111–140 (RRYPSGEERCIACKLCEAVCPAQAITIEAE) and 150–179 (TRYDIDMTKCIYCGFCQESCPVDAIVESPN). Residues Cys120, Cys123, Cys126, Cys130, Cys159, Cys162, Cys165, and Cys169 each coordinate [4Fe-4S] cluster.

This sequence belongs to the complex I 23 kDa subunit family. In terms of assembly, complex I is composed of about 40 different subunits. Requires [4Fe-4S] cluster as cofactor.

Its subcellular location is the mitochondrion. It catalyses the reaction a ubiquinone + NADH + 5 H(+)(in) = a ubiquinol + NAD(+) + 4 H(+)(out). In terms of biological role, core subunit of the mitochondrial membrane respiratory chain NADH dehydrogenase (Complex I) that is believed to belong to the minimal assembly required for catalysis. Complex I functions in the transfer of electrons from NADH to the respiratory chain. The immediate electron acceptor for the enzyme is believed to be ubiquinone. May donate electrons to ubiquinone. The polypeptide is NADH-ubiquinone oxidoreductase 23 kDa subunit, mitochondrial (nuo21.3c) (Neurospora crassa (strain ATCC 24698 / 74-OR23-1A / CBS 708.71 / DSM 1257 / FGSC 987)).